Consider the following 419-residue polypeptide: Acyl-coenzyme A thioesterase 6 (419 aa).

Active-site charge relay system residues include S232, D324, and H358. The Peroxisome targeting signal motif lies at 417 to 419; it reads SKL.

The protein belongs to the C/M/P thioester hydrolase family. In terms of tissue distribution, highly expressed in white adipose tissue. Detected at lower levels in kidney, liver, brown adipose tissue and brain.

It is found in the peroxisome. The enzyme catalyses pristanoyl-CoA + H2O = 2,6,10,14-tetramethylpentadecanoate + CoA + H(+). It carries out the reaction phytanoyl-CoA + H2O = 3,7,11,15-tetramethylhexadecanoate + CoA + H(+). It functions in the pathway lipid metabolism; fatty acid metabolism. Functionally, catalyzes the hydrolysis of acyl-CoAs into free fatty acids and coenzyme A (CoASH), regulating their respective intracellular levels. Catalyzes the hydrolysis of phytanoyl-CoA and pristanoyl-CoA, two methyl-branched fatty acids derived from phytol, that enter the body via the diet. The sequence is that of Acyl-coenzyme A thioesterase 6 from Mus musculus (Mouse).